Reading from the N-terminus, the 577-residue chain is DEAD-box ATP-dependent RNA helicase 22 (577 aa).

A Q motif motif is present at residues 82 to 110; the sequence is TSWESLGVSDRLASALHGAGLARPSLVQA. The Helicase ATP-binding domain maps to 113 to 375; that stretch reads IPHVLTTNDV…GGVLKRMFPN (263 aa). 126–133 provides a ligand contact to ATP; it reads AETGSGKT. A DEAD box motif is present at residues 249-252; that stretch reads DEAD. The interval 288-317 is disordered; the sequence is SLGDTNEYREDSDSQSAELSADDEENEDGL. The region spanning 407–568 is the Helicase C-terminal domain; sequence LLDAVKYGLK…SFRNKLKKQA (162 aa).

It belongs to the DEAD box helicase family.

The enzyme catalyses ATP + H2O = ADP + phosphate + H(+). The sequence is that of DEAD-box ATP-dependent RNA helicase 22 from Oryza sativa subsp. japonica (Rice).